Reading from the N-terminus, the 37-residue chain is Palicourein (37 aa).

Positions 1–37 (GDPTFCGETCRVIPVCTYSAALGCTCDDRSDGLCKRN) form a cross-link, cyclopeptide (Gly-Asn). 3 disulfide bridges follow: C6-C24, C10-C26, and C16-C34.

Belongs to the cyclotide family. This is a cyclic peptide.

Its function is as follows. Probably participates in a plant defense mechanism. Inhibits the cytopathic effects of the human immunodeficiency virus. The protein is Palicourein of Palicourea condensata (Cappel).